The sequence spans 238 residues: ATP-dependent dethiobiotin synthetase BioD (238 aa).

12–17 (EVGKTV) contributes to the ATP binding site. Thr16 lines the Mg(2+) pocket. Lys37 is an active-site residue. Residue Thr41 participates in substrate binding. Residues Asp50, 109–112 (EGAG), 170–171 (GS), and 200–202 (PAG) each bind ATP. Residues Asp50 and Glu109 each coordinate Mg(2+).

Belongs to the dethiobiotin synthetase family. As to quaternary structure, homodimer. It depends on Mg(2+) as a cofactor.

Its subcellular location is the cytoplasm. It carries out the reaction (7R,8S)-7,8-diammoniononanoate + CO2 + ATP = (4R,5S)-dethiobiotin + ADP + phosphate + 3 H(+). It functions in the pathway cofactor biosynthesis; biotin biosynthesis; biotin from 7,8-diaminononanoate: step 1/2. Catalyzes a mechanistically unusual reaction, the ATP-dependent insertion of CO2 between the N7 and N8 nitrogen atoms of 7,8-diaminopelargonic acid (DAPA, also called 7,8-diammoniononanoate) to form a ureido ring. The polypeptide is ATP-dependent dethiobiotin synthetase BioD (Parafrankia sp. (strain EAN1pec)).